Here is a 530-residue protein sequence, read N- to C-terminus: Fusaric acid resistance protein FusA (530 aa).

The N-terminal stretch at 1 to 23 (MQSPATKGTLALAVLAVSLIMAG) is a signal peptide. Cys-24 carries N-palmitoyl cysteine lipidation. Residue Cys-24 is the site of S-diacylglycerol cysteine attachment. 2 disordered regions span residues 375-442 (NAGV…RQRA) and 476-530 (GVET…PAAR). Low complexity-rich tracts occupy residues 421–430 (RPQLPAVARR) and 494–530 (AAGA…PAAR).

Belongs to the outer membrane factor (OMF) (TC 1.B.17) family.

Its subcellular location is the cell membrane. Its function is as follows. Involved in the resistance (detoxification) of the fungal toxin fusaric acid. In Burkholderia cepacia (Pseudomonas cepacia), this protein is Fusaric acid resistance protein FusA (fusA).